Here is a 594-residue protein sequence, read N- to C-terminus: ATP-dependent RNA helicase DBP9 (594 aa).

Positions 17-45 (TTFEAFHLDSRLLQAIKNIGFQYPTLIQS) match the Q motif motif. In terms of domain architecture, Helicase ATP-binding spans 49-233 (PLALQQKRDI…QKFCRSPAIL (185 aa)). 62-69 (AATGSGKT) serves as a coordination point for ATP. A DEAD box motif is present at residues 179–182 (DEVD). Residues 246–476 (KLLQYYVKVS…PYKFDQKQVE (231 aa)) form the Helicase C-terminal domain. Disordered stretches follow at residues 339–377 (EDDEIEEGHNTENQEEKSLEGEPENDKKPSKKKKVQVKK) and 558–594 (TKVKFVPFHNAKKRHSHKKGRVSKPKNGKVDPLKNFK). Residues 345-366 (EGHNTENQEEKSLEGEPENDKK) show a composition bias toward basic and acidic residues. Basic residues predominate over residues 567 to 584 (NAKKRHSHKKGRVSKPKN). Basic and acidic residues predominate over residues 585-594 (GKVDPLKNFK).

The protein belongs to the DEAD box helicase family. DDX56/DBP9 subfamily. Interacts with DBP6.

The protein resides in the nucleus. It localises to the nucleolus. The enzyme catalyses ATP + H2O = ADP + phosphate + H(+). ATP-binding RNA helicase involved in the biogenesis of 60S ribosomal subunits and is required for the normal formation of 25S and 5.8S rRNAs. In Saccharomyces cerevisiae (strain YJM789) (Baker's yeast), this protein is ATP-dependent RNA helicase DBP9 (DBP9).